Reading from the N-terminus, the 515-residue chain is Putative asparagine synthetase [glutamine-hydrolyzing] 2 (515 aa).

The For GATase activity role is filled by Cys2. The region spanning 2–229 is the Glutamine amidotransferase type-2 domain; sequence CGINGIIRFG…ARQNLIFDLD (228 aa). Residues 52–56, 92–94, and Asp114 each bind L-glutamine; these read RLAIL and NGE. Residues Ile306 and 378–379 contribute to the ATP site; that span reads SG.

This sequence belongs to the asparagine synthetase family.

It catalyses the reaction L-aspartate + L-glutamine + ATP + H2O = L-asparagine + L-glutamate + AMP + diphosphate + H(+). It functions in the pathway amino-acid biosynthesis; L-asparagine biosynthesis; L-asparagine from L-aspartate (L-Gln route): step 1/1. The protein is Putative asparagine synthetase [glutamine-hydrolyzing] 2 of Methanocaldococcus jannaschii (strain ATCC 43067 / DSM 2661 / JAL-1 / JCM 10045 / NBRC 100440) (Methanococcus jannaschii).